The primary structure comprises 537 residues: Cytochrome P450 monooxygenase alt2 (537 aa).

The helical transmembrane segment at 4–24 (HLLILAAVVLLIIHIVNNFLI) threads the bilayer. C474 is a binding site for heme.

This sequence belongs to the cytochrome P450 family. It depends on heme as a cofactor.

The protein resides in the membrane. It functions in the pathway secondary metabolite biosynthesis. In terms of biological role, cytochrome P450 monooxygenase; part of the gene cluster that mediates the biosynthesis of alternapyrone derivatives. Alternapyrone is a decaketide with octa-methylation from methionine on every C2 unit except the third unit. All the domains in the polyketide synthase alt5 are apparently involved in alternapyrone synthesis, that is, the 8 CMeT, 7 KR, 7 DH, and 4 ER reactions in the 9 KS-mediated condensation steps required for alternapyrone synthesis. the alternapyrone produced by alt5 might be intensively modified by cytochrome P450 monooxygenases alt1, alt2 and alt3 and FAD-dependent oxidoreductase alt4 present in the alt gene cluster. The chain is Cytochrome P450 monooxygenase alt2 from Alternaria solani.